A 423-amino-acid chain; its full sequence is Probable sucrose-phosphate synthase (423 aa).

It belongs to the glycosyltransferase 1 family.

It catalyses the reaction beta-D-fructose 6-phosphate + UDP-alpha-D-glucose = sucrose 6(F)-phosphate + UDP + H(+). Plays a role in sucrose synthesis by catalyzing the first step of sucrose biosynthesis from UDP-glucose and fructose-6-phosphate. This is Probable sucrose-phosphate synthase from Thermosipho melanesiensis (strain DSM 12029 / CIP 104789 / BI429).